Here is a 411-residue protein sequence, read N- to C-terminus: Lysosome-associated membrane glycoprotein 3 (411 aa).

An N-terminal signal peptide occupies residues methionine 1 to glycine 21. Residues tyrosine 22–threonine 376 lie on the Lumenal side of the membrane. Residues histidine 172–proline 192 show a composition bias toward polar residues. Residues histidine 172–proline 204 are disordered. Residue asparagine 227 is glycosylated (N-linked (GlcNAc...) asparagine). Intrachain disulfides connect cysteine 232-cysteine 269 and cysteine 334-cysteine 371. A helical membrane pass occupies residues valine 377–tyrosine 397. The Cytoplasmic portion of the chain corresponds to lysine 398–isoleucine 411.

The protein belongs to the LAMP family. As to quaternary structure, monomer. Interacts with FURIN.

Its subcellular location is the cell surface. The protein localises to the lysosome membrane. The protein resides in the cytoplasmic vesicle membrane. It is found in the early endosome membrane. Functionally, lysosomal membrane glycoprotein which plays a role in the unfolded protein response (UPR) that contributes to protein degradation and cell survival during proteasomal dysfunction. Plays a role in the process of fusion of the lysosome with the autophagosome, thereby modulating the autophagic process. Promotes hepatocellular lipogenesis through activation of the PI3K/Akt pathway. May also play a role in dendritic cell function and in adaptive immunity. This is Lysosome-associated membrane glycoprotein 3 (Lamp3) from Mus musculus (Mouse).